The chain runs to 231 residues: Ferredoxin-type protein NapG (231 aa).

The tat-type signal signal peptide spans 1 to 41 (MSRSAKPQNGRRRFLRDVVRTAGGLAAVGVALGLQQQTARA). 4Fe-4S ferredoxin-type domains follow at residues 50–81 (GAIN…LATL), 89–121 (TPYF…REIE), 130–166 (LAVL…LELE), and 177–208 (FLPT…VLPL). The [4Fe-4S] cluster site is built by C61, C64, C67, C71, C99, C102, C107, C111, C139, C147, C150, C154, C186, C189, C192, and C196.

It depends on [4Fe-4S] cluster as a cofactor. In terms of processing, exported by the Tat system. The position of the signal peptide cleavage has not been experimentally proven.

It is found in the periplasm. Functionally, required for electron transfer from ubiquinol, via NapC, to the periplasmic nitrate reductase NapAB complex. This chain is Ferredoxin-type protein NapG (napG), found in Escherichia coli (strain K12).